The chain runs to 261 residues: Triosephosphate isomerase (261 aa).

10–12 lines the substrate pocket; it reads NWK. The active-site Electrophile is H100. E172 serves as the catalytic Proton acceptor. Substrate contacts are provided by residues G178, S218, and 239–240; that span reads GG.

The protein belongs to the triosephosphate isomerase family. Homodimer.

The protein resides in the cytoplasm. The enzyme catalyses D-glyceraldehyde 3-phosphate = dihydroxyacetone phosphate. Its pathway is carbohydrate biosynthesis; gluconeogenesis. It participates in carbohydrate degradation; glycolysis; D-glyceraldehyde 3-phosphate from glycerone phosphate: step 1/1. In terms of biological role, involved in the gluconeogenesis. Catalyzes stereospecifically the conversion of dihydroxyacetone phosphate (DHAP) to D-glyceraldehyde-3-phosphate (G3P). The polypeptide is Triosephosphate isomerase (Mycolicibacterium paratuberculosis (strain ATCC BAA-968 / K-10) (Mycobacterium paratuberculosis)).